Here is a 100-residue protein sequence, read N- to C-terminus: Eukaryotic translation initiation factor 4E-binding protein 3 (100 aa).

Positions 40–46 match the YXXXXLphi motif motif; the sequence is YDRKFLL. The disordered stretch occupies residues 81–100; sequence LKEQETEEEIPDDAQFEMDI. The span at 85–100 shows a compositional bias: acidic residues; that stretch reads ETEEEIPDDAQFEMDI. Positions 96–100 match the TOS motif motif; the sequence is FEMDI.

It belongs to the eIF4E-binding protein family. As to quaternary structure, interacts with EIF4E. Interacts with RPA2 (in unphosphorylated form via N-terminus); the interaction enhances EIF4EBP3-mediated inhibition of EIF4E-mediated mRNA nuclear export. In terms of processing, phosphorylated. Expression is highest in skeletal muscle, heart, kidney, and pancreas, whereas there is very little expression in brain and thymus.

The protein resides in the cytoplasm. It is found in the nucleus. Its function is as follows. Repressor of translation initiation that regulates EIF4E activity by preventing its assembly into the eIF4F complex: the hypophosphorylated form competes with EIF4G1/EIF4G3 and strongly binds to EIF4E, leading to repression of translation. In contrast, the hyperphosphorylated form dissociates from EIF4E, allowing interaction between EIF4G1/EIF4G3 and EIF4E, leading to initiation of translation. Inhibits EIF4E-mediated mRNA nuclear export. This is Eukaryotic translation initiation factor 4E-binding protein 3 (EIF4EBP3) from Homo sapiens (Human).